Consider the following 41-residue polypeptide: Large ribosomal subunit protein bL36 (41 aa).

The protein belongs to the bacterial ribosomal protein bL36 family.

This is Large ribosomal subunit protein bL36 from Rickettsia africae (strain ESF-5).